The chain runs to 158 residues: Histone H3-like centromeric protein CSE4 (158 aa).

Over residues Met-1–Leu-18 the composition is skewed to polar residues. A disordered region spans residues Met-1 to Lys-59. The segment covering Arg-20 to Arg-29 has biased composition (basic and acidic residues). The tract at residues Thr-54 to Asn-157 is H3-like.

It belongs to the histone H3 family. Component of centromeric nucleosomes, where DNA is wrapped around a histone octamer core. The octamer contains two molecules each of H2A, H2B, CSE4/CENPA and H4 assembled in one CSE4-H4 heterotetramer and two H2A-H2B heterodimers. Interacts with the inner kinetochore. Ubiquitinated. Is degraded through ubiquitin-mediated proteolysis when not protected by its association to the kinetochore.

It is found in the nucleus. The protein resides in the chromosome. The protein localises to the centromere. Histone H3-like nucleosomal protein that is specifically found in centromeric nucleosomes. Replaces conventional H3 in the nucleosome core of centromeric chromatin that serves as an assembly site for the inner kinetochore. Required for recruitment and assembly of kinetochore proteins, mitotic progression and chromosome segregation. May serve as an epigenetic mark that propagates centromere identity through replication and cell division. This chain is Histone H3-like centromeric protein CSE4 (CSE4), found in Millerozyma farinosa (Yeast).